A 276-amino-acid polypeptide reads, in one-letter code: NADPH-dependent 7-cyano-7-deazaguanine reductase (276 aa).

83 to 85 (VES) contacts substrate. 85-86 (SK) is a binding site for NADPH. Cys184 functions as the Thioimide intermediate in the catalytic mechanism. The Proton donor role is filled by Asp191. Residue 223–224 (HE) participates in substrate binding. 252 to 253 (RG) is a binding site for NADPH.

The protein belongs to the GTP cyclohydrolase I family. QueF type 2 subfamily. Homodimer.

The protein localises to the cytoplasm. It catalyses the reaction 7-aminomethyl-7-carbaguanine + 2 NADP(+) = 7-cyano-7-deazaguanine + 2 NADPH + 3 H(+). Its pathway is tRNA modification; tRNA-queuosine biosynthesis. Functionally, catalyzes the NADPH-dependent reduction of 7-cyano-7-deazaguanine (preQ0) to 7-aminomethyl-7-deazaguanine (preQ1). The polypeptide is NADPH-dependent 7-cyano-7-deazaguanine reductase (Azotobacter vinelandii (strain DJ / ATCC BAA-1303)).